We begin with the raw amino-acid sequence, 731 residues long: E3 ubiquitin-protein ligase SMURF1 (731 aa).

One can recognise a C2 domain in the interval 1–120 (MSNPGTRRNG…TGYQRLDLCK (120 aa)). Ser-200 is modified (phosphoserine). Positions 216–237 (EVRGPLQTPQNRPHGHQSPELP) are disordered. 2 consecutive WW domains span residues 234–267 (PELP…DPRI) and 280–313 (GPLP…DPRL). Residues Lys-355 and Lys-357 each participate in a glycyl lysine isopeptide (Lys-Gly) (interchain with G-Cter in ubiquitin) cross-link. One can recognise an HECT domain in the interval 394–731 (RPKDLKKRLM…VEETCGFAVE (338 aa)). The active-site Glycyl thioester intermediate is the Cys-699.

As to quaternary structure, interacts with TRAF4. Interacts (via HECT domain) with FBXL15 (via LRR repeats). Interacts with SMAD7 and TGFBR1; SMAD7 recruits SMURF1 to TGFBR1 and regulates TGF-beta receptor degradation. Interacts with MAVS; the interaction is mediated by NDFIP1. Auto-ubiquitinated in presence of NDFIP1. Ubiquitinated by the SCF(FBXL15) complex at Lys-355 and Lys-357, leading to its degradation by the proteasome. Lys-357 is the primary ubiquitination site.

It localises to the cytoplasm. The protein localises to the cell membrane. It carries out the reaction S-ubiquitinyl-[E2 ubiquitin-conjugating enzyme]-L-cysteine + [acceptor protein]-L-lysine = [E2 ubiquitin-conjugating enzyme]-L-cysteine + N(6)-ubiquitinyl-[acceptor protein]-L-lysine.. The protein operates within protein modification; protein ubiquitination. Its function is as follows. E3 ubiquitin-protein ligase that acts as a negative regulator of BMP signaling pathway. Mediates ubiquitination and degradation of SMAD1 and SMAD5, 2 receptor-regulated SMADs specific for the BMP pathway. Promotes ubiquitination and subsequent proteasomal degradation of TRAF family members and RHOA. Promotes ubiquitination and subsequent proteasomal degradation of MAVS. Acts as an antagonist of TGF-beta signaling by ubiquitinating TGFBR1 and targeting it for degradation. Plays a role in dendrite formation by melanocytes. This is E3 ubiquitin-protein ligase SMURF1 (Smurf1) from Mus musculus (Mouse).